We begin with the raw amino-acid sequence, 499 residues long: Alpha-L-arabinofuranosidase B (499 aa).

A signal peptide spans 1-18 (MFSRRNLVALGLAATVSA). N-linked (GlcNAc...) asparagine glycosylation is found at Asn83 and Asn202.

It belongs to the glycosyl hydrolase 54 family.

The catalysed reaction is Hydrolysis of terminal non-reducing alpha-L-arabinofuranoside residues in alpha-L-arabinosides.. The protein operates within glycan metabolism; L-arabinan degradation. Functionally, able to hydrolyze 1,5-, 1,3- and 1,2-alpha-linkages not only in L-arabinofuranosyl oligosaccharides, but also in polysac-charides containing terminal non-reducing L-arabinofuranoses in side chains, like L-arabinan, arabinogalactan and arabinoxylan. The polypeptide is Alpha-L-arabinofuranosidase B (abfB) (Aspergillus niger).